Reading from the N-terminus, the 87-residue chain is Small ribosomal subunit protein bS20 (87 aa).

This sequence belongs to the bacterial ribosomal protein bS20 family.

In terms of biological role, binds directly to 16S ribosomal RNA. The sequence is that of Small ribosomal subunit protein bS20 from Sphingopyxis alaskensis (strain DSM 13593 / LMG 18877 / RB2256) (Sphingomonas alaskensis).